We begin with the raw amino-acid sequence, 276 residues long: Small ribosomal subunit protein uS3 (276 aa).

The KH type-2 domain maps to I43–K111. Residues A218–G227 are compositionally biased toward low complexity. The segment at A218–A276 is disordered. Positions P228–D243 are enriched in basic and acidic residues. A compositionally biased stretch (low complexity) spans A253–A276.

The protein belongs to the universal ribosomal protein uS3 family. As to quaternary structure, part of the 30S ribosomal subunit. Forms a tight complex with proteins S10 and S14.

In terms of biological role, binds the lower part of the 30S subunit head. Binds mRNA in the 70S ribosome, positioning it for translation. The sequence is that of Small ribosomal subunit protein uS3 from Pseudarthrobacter chlorophenolicus (strain ATCC 700700 / DSM 12829 / CIP 107037 / JCM 12360 / KCTC 9906 / NCIMB 13794 / A6) (Arthrobacter chlorophenolicus).